The sequence spans 368 residues: Putative agmatine deiminase (368 aa).

Cysteine 359 serves as the catalytic Amidino-cysteine intermediate.

Belongs to the agmatine deiminase family.

It catalyses the reaction agmatine + H2O = N-carbamoylputrescine + NH4(+). In Pectobacterium atrosepticum (strain SCRI 1043 / ATCC BAA-672) (Erwinia carotovora subsp. atroseptica), this protein is Putative agmatine deiminase.